We begin with the raw amino-acid sequence, 543 residues long: Myotubularin-related protein 9-like (543 aa).

A Myotubularin phosphatase domain is found at 124–502; it reads AWHFHPPECY…QSLRLWQGLF (379 aa).

This sequence belongs to the protein-tyrosine phosphatase family. Non-receptor class myotubularin subfamily.

Its function is as follows. Probable pseudophosphatase. This Bos taurus (Bovine) protein is Myotubularin-related protein 9-like.